We begin with the raw amino-acid sequence, 249 residues long: Coproheme decarboxylase (249 aa).

Residues Arg131, 145-149 (YPMDK), His172, and Gln185 each bind Fe-coproporphyrin III. Tyr145 is an active-site residue.

This sequence belongs to the ChdC family. Type 1 subfamily. Fe-coproporphyrin III is required as a cofactor.

The enzyme catalyses Fe-coproporphyrin III + 2 H2O2 + 2 H(+) = heme b + 2 CO2 + 4 H2O. It carries out the reaction Fe-coproporphyrin III + H2O2 + H(+) = harderoheme III + CO2 + 2 H2O. The catalysed reaction is harderoheme III + H2O2 + H(+) = heme b + CO2 + 2 H2O. Its pathway is porphyrin-containing compound metabolism; protoheme biosynthesis. Functionally, involved in coproporphyrin-dependent heme b biosynthesis. Catalyzes the decarboxylation of Fe-coproporphyrin III (coproheme) to heme b (protoheme IX), the last step of the pathway. The reaction occurs in a stepwise manner with a three-propionate intermediate. This Staphylococcus epidermidis (strain ATCC 12228 / FDA PCI 1200) protein is Coproheme decarboxylase.